We begin with the raw amino-acid sequence, 178 residues long: Large ribosomal subunit protein uL6 (178 aa).

The protein belongs to the universal ribosomal protein uL6 family. Part of the 50S ribosomal subunit.

Its function is as follows. This protein binds to the 23S rRNA, and is important in its secondary structure. It is located near the subunit interface in the base of the L7/L12 stalk, and near the tRNA binding site of the peptidyltransferase center. The protein is Large ribosomal subunit protein uL6 of Frankia casuarinae (strain DSM 45818 / CECT 9043 / HFP020203 / CcI3).